We begin with the raw amino-acid sequence, 566 residues long: Glutamate--tRNA ligase (566 aa).

The 'HIGH' region signature appears at 105 to 115 (PNPDGPIHLGN).

It belongs to the class-I aminoacyl-tRNA synthetase family. Glutamate--tRNA ligase type 2 subfamily.

Its subcellular location is the cytoplasm. The catalysed reaction is tRNA(Glu) + L-glutamate + ATP = L-glutamyl-tRNA(Glu) + AMP + diphosphate. In terms of biological role, catalyzes the attachment of glutamate to tRNA(Glu) in a two-step reaction: glutamate is first activated by ATP to form Glu-AMP and then transferred to the acceptor end of tRNA(Glu). The protein is Glutamate--tRNA ligase of Sulfurisphaera tokodaii (strain DSM 16993 / JCM 10545 / NBRC 100140 / 7) (Sulfolobus tokodaii).